Reading from the N-terminus, the 331-residue chain is RNA 3'-terminal phosphate cyclase (331 aa).

Residues Gln100 and 276–280 each bind ATP; that span reads HLADQ. His301 functions as the Tele-AMP-histidine intermediate in the catalytic mechanism.

The protein belongs to the RNA 3'-terminal cyclase family. Type 1 subfamily.

It localises to the cytoplasm. It catalyses the reaction a 3'-end 3'-phospho-ribonucleotide-RNA + ATP = a 3'-end 2',3'-cyclophospho-ribonucleotide-RNA + AMP + diphosphate. In terms of biological role, catalyzes the conversion of 3'-phosphate to a 2',3'-cyclic phosphodiester at the end of RNA. The mechanism of action of the enzyme occurs in 3 steps: (A) adenylation of the enzyme by ATP; (B) transfer of adenylate to an RNA-N3'P to produce RNA-N3'PP5'A; (C) and attack of the adjacent 2'-hydroxyl on the 3'-phosphorus in the diester linkage to produce the cyclic end product. The biological role of this enzyme is unknown but it is likely to function in some aspects of cellular RNA processing. This chain is RNA 3'-terminal phosphate cyclase, found in Methanococcoides burtonii (strain DSM 6242 / NBRC 107633 / OCM 468 / ACE-M).